Consider the following 687-residue polypeptide: MWCIVLLSLLAWVDAEPTMYGEILSPNYPQAYPNEVEKSWDIEVPEGYGIHLYFTHLDIELSENCAYDSVQIKSGGREEGKLCGQKTSKNPKSAVVEEFQVPYNKLQVIFTSDFSNEERFTGFAAYYVAVDVNECTDFADSPCSHFCNNYIGGYFCSCPPEYFLHEDKKNCGVNCSGDVFTTLIGEVASPNYPNPYPENSRCDYQILLEEGFQVVVTMRREDFDVEPADSGGHCPDSLIFVAGNQQFGPYCGNGFPGPLTIETKSNALNIIFQTDETEQKKGWKFRYHGDPIPCPKEVTANSFWEPEKAKYVFKDVVKITCLDGFEVVQGTVGSTSFYSTCQSNGKWSNSKLRCQPVDCGSPEPIPHGKVEDPEHTLFGSVTRYSCEQPYYYMETDGSEEYRCAGNGSWVNELLGAELPKCVPVCGIPSEPFKGMQRIFGGIITKIESFPWQVFFQNPRAGGALIDEQWVLTAAHVVEGNREPVMYVGSSSVVTSHLANGQMLTAERVFIHPGWEEQDASERKNFDNDIALVRLKDPVKMGPTVSPICLPGTSSDYDPSVGDLGLISGWGRTNTKDHVVKLRGAKLPVAPSDKCQEIKGTNPRIGTSSFVFTDNMICAGGRGVDSCNGDSGGAFAMQVPNEETPKFYVAGLVSWGPQCGTYGIYTRVKNYIDWIRETMQQNSAPSVD.

The signal sequence occupies residues 1 to 15 (MWCIVLLSLLAWVDA). In terms of domain architecture, CUB 1 spans 16–130 (EPTMYGEILS…TGFAAYYVAV (115 aa)). Residues E60, D68, D113, D131, V132, and E134 each coordinate Ca(2+). Residues C65 and C83 are joined by a disulfide bond. An EGF-like; calcium-binding domain is found at 131-172 (DVNECTDFADSPCSHFCNNYIGGYFCSCPPEYFLHEDKKNCG). Intrachain disulfides connect C135/C147, C143/C156, and C158/C171. N149, Y150, and G153 together coordinate Ca(2+). N149 is subject to (3R)-3-hydroxyasparagine. The N-linked (GlcNAc...) asparagine glycan is linked to N174. Disulfide bonds link C175–C202, C234–C251, C294–C341, C321–C354, C359–C403, C386–C421, C425–C548, C594–C617, and C626–C658. Positions 175–290 (CSGDVFTTLI…KGWKFRYHGD (116 aa)) constitute a CUB 2 domain. Sushi domains follow at residues 292-356 (IPCP…RCQP) and 357-423 (VDCG…KCVP). N-linked (GlcNAc...) asparagine glycosylation is present at N406. The Peptidase S1 domain occupies 438–679 (IFGGIITKIE…YIDWIRETMQ (242 aa)). Active-site charge relay system residues include H475 and D528. S630 acts as the Charge relay system in catalysis.

The protein belongs to the peptidase S1 family. C1 is a calcium-dependent trimolecular complex of C1q, C1r and C1s in the molar ration of 1:2:2. Activated C1s is an disulfide-linked heterodimer of a heavy chain and a light chain. Post-translationally, the iron and 2-oxoglutarate dependent 3-hydroxylation of aspartate and asparagine is (R) stereospecific within EGF domains.

The enzyme catalyses Cleavage of Arg-|-Ala bond in complement component C4 to form C4a and C4b, and Lys(or Arg)-|-Lys bond in complement component C2 to form C2a and C2b: the 'classical' pathway C3 convertase.. With respect to regulation, inhibited by SERPING1. Its function is as follows. C1s B chain is a serine protease that combines with C1q and C1r to form C1, the first component of the classical pathway of the complement system. C1r activates C1s so that it can, in turn, activate C2 and C4. Also cleaves IGFBP5 and thereby inhibits the trophic effects of IGF1. This Sus scrofa (Pig) protein is Complement C1s subcomponent.